Reading from the N-terminus, the 154-residue chain is Myoglobin (154 aa).

Positions 2–148 (GLSDGEWQLV…FRNDMAAKYK (147 aa)) constitute a Globin domain. Position 4 is a phosphoserine (Ser-4). A nitrite-binding site is contributed by His-65. An O2-binding site is contributed by His-65. The residue at position 68 (Thr-68) is a Phosphothreonine. His-94 lines the heme b pocket.

The protein belongs to the globin family. As to quaternary structure, monomeric.

The protein localises to the cytoplasm. It is found in the sarcoplasm. The catalysed reaction is Fe(III)-heme b-[protein] + nitric oxide + H2O = Fe(II)-heme b-[protein] + nitrite + 2 H(+). It catalyses the reaction H2O2 + AH2 = A + 2 H2O. In terms of biological role, monomeric heme protein which primary function is to store oxygen and facilitate its diffusion within muscle tissues. Reversibly binds oxygen through a pentacoordinated heme iron and enables its timely and efficient release as needed during periods of heightened demand. Depending on the oxidative conditions of tissues and cells, and in addition to its ability to bind oxygen, it also has a nitrite reductase activity whereby it regulates the production of bioactive nitric oxide. Under stress conditions, like hypoxia and anoxia, it also protects cells against reactive oxygen species thanks to its pseudoperoxidase activity. The polypeptide is Myoglobin (MB) (Didelphis virginiana (North American opossum)).